Consider the following 81-residue polypeptide: Photosystem I iron-sulfur center (81 aa).

4Fe-4S ferredoxin-type domains follow at residues 2 to 31 and 39 to 68; these read AHSV…MIPW and IASA…VRVY. Cys11, Cys14, Cys17, Cys21, Cys48, Cys51, Cys54, and Cys58 together coordinate [4Fe-4S] cluster.

In terms of assembly, the eukaryotic PSI reaction center is composed of at least 11 subunits. Requires [4Fe-4S] cluster as cofactor.

Its subcellular location is the plastid. It is found in the chloroplast thylakoid membrane. It catalyses the reaction reduced [plastocyanin] + hnu + oxidized [2Fe-2S]-[ferredoxin] = oxidized [plastocyanin] + reduced [2Fe-2S]-[ferredoxin]. Its function is as follows. Apoprotein for the two 4Fe-4S centers FA and FB of photosystem I (PSI); essential for photochemical activity. FB is the terminal electron acceptor of PSI, donating electrons to ferredoxin. The C-terminus interacts with PsaA/B/D and helps assemble the protein into the PSI complex. Required for binding of PsaD and PsaE to PSI. PSI is a plastocyanin-ferredoxin oxidoreductase, converting photonic excitation into a charge separation, which transfers an electron from the donor P700 chlorophyll pair to the spectroscopically characterized acceptors A0, A1, FX, FA and FB in turn. The sequence is that of Photosystem I iron-sulfur center from Staurastrum punctulatum (Green alga).